Here is a 554-residue protein sequence, read N- to C-terminus: GPI transamidase component PIG-S homolog (554 aa).

The Cytoplasmic portion of the chain corresponds to 1–73 (MSPCKWLTMF…LNKPEKSLKR (73 aa)). Residues 74 to 94 (YALLSFYVIILLAIPVWWKTT) form a helical membrane-spanning segment. The Lumenal segment spans residues 95-511 (HYERSSLPFE…VTTIYFPDES (417 aa)). N-linked (GlcNAc...) asparagine glycans are attached at residues N132 and N375. Residues 512–532 (KYGIYAPLFAPILIPLLISFI) traverse the membrane as a helical segment. The Cytoplasmic portion of the chain corresponds to 533–554 (KEVKDMLRERKLHRVANVPKPN).

Belongs to the PIGS family. In terms of assembly, forms a complex with PIG-T homolog, PIG-U homolog and GPI8.

It localises to the endoplasmic reticulum membrane. It functions in the pathway glycolipid biosynthesis; glycosylphosphatidylinositol-anchor biosynthesis. In terms of biological role, component of the GPI transamidase complex. Involved in transfer of GPI to proteins. This is GPI transamidase component PIG-S homolog (gpi17) from Schizosaccharomyces pombe (strain 972 / ATCC 24843) (Fission yeast).